We begin with the raw amino-acid sequence, 401 residues long: ATP phosphoribosyltransferase regulatory subunit (401 aa).

This sequence belongs to the class-II aminoacyl-tRNA synthetase family. HisZ subfamily. As to quaternary structure, heteromultimer composed of HisG and HisZ subunits.

It localises to the cytoplasm. Its pathway is amino-acid biosynthesis; L-histidine biosynthesis; L-histidine from 5-phospho-alpha-D-ribose 1-diphosphate: step 1/9. Functionally, required for the first step of histidine biosynthesis. May allow the feedback regulation of ATP phosphoribosyltransferase activity by histidine. This chain is ATP phosphoribosyltransferase regulatory subunit, found in Desulforamulus reducens (strain ATCC BAA-1160 / DSM 100696 / MI-1) (Desulfotomaculum reducens).